The following is a 332-amino-acid chain: Ribosomal RNA small subunit methyltransferase H (332 aa).

S-adenosyl-L-methionine is bound by residues 39–41 (GGY), Asp56, Phe83, Asp100, and Gln107.

It belongs to the methyltransferase superfamily. RsmH family.

The protein resides in the cytoplasm. The enzyme catalyses cytidine(1402) in 16S rRNA + S-adenosyl-L-methionine = N(4)-methylcytidine(1402) in 16S rRNA + S-adenosyl-L-homocysteine + H(+). Its function is as follows. Specifically methylates the N4 position of cytidine in position 1402 (C1402) of 16S rRNA. The sequence is that of Ribosomal RNA small subunit methyltransferase H from Bartonella tribocorum (strain CIP 105476 / IBS 506).